We begin with the raw amino-acid sequence, 93 residues long: Putative pterin-4-alpha-carbinolamine dehydratase (93 aa).

Belongs to the pterin-4-alpha-carbinolamine dehydratase family.

The catalysed reaction is (4aS,6R)-4a-hydroxy-L-erythro-5,6,7,8-tetrahydrobiopterin = (6R)-L-erythro-6,7-dihydrobiopterin + H2O. This chain is Putative pterin-4-alpha-carbinolamine dehydratase, found in Thermomicrobium roseum (strain ATCC 27502 / DSM 5159 / P-2).